Reading from the N-terminus, the 270-residue chain is Phosphatidylglycerol--prolipoprotein diacylglyceryl transferase (270 aa).

The next 4 helical transmembrane spans lie at 19–39 (FPVYWYGIIIGTGVLLGLWLA), 56–76 (LVLIAVPIAILFARMYYVIFE), 92–112 (QGGLAIHGGLIGAVITGILFA), and 116–136 (GVSFWKLADIAAPSILLGQAI). Arginine 138 serves as a coordination point for a 1,2-diacyl-sn-glycero-3-phospho-(1'-sn-glycerol). 3 consecutive transmembrane segments (helical) span residues 178–198 (HPTFLYESLWNFVGVILLLAL), 206–226 (GELFFTYLIWYSVGRFFVEGL), and 236–256 (LRIAQVMSIGLVVISIIFIIV).

This sequence belongs to the Lgt family.

Its subcellular location is the cell membrane. It catalyses the reaction L-cysteinyl-[prolipoprotein] + a 1,2-diacyl-sn-glycero-3-phospho-(1'-sn-glycerol) = an S-1,2-diacyl-sn-glyceryl-L-cysteinyl-[prolipoprotein] + sn-glycerol 1-phosphate + H(+). Its pathway is protein modification; lipoprotein biosynthesis (diacylglyceryl transfer). Functionally, catalyzes the transfer of the diacylglyceryl group from phosphatidylglycerol to the sulfhydryl group of the N-terminal cysteine of a prolipoprotein, the first step in the formation of mature lipoproteins. The sequence is that of Phosphatidylglycerol--prolipoprotein diacylglyceryl transferase from Bacillus cereus (strain G9842).